The chain runs to 240 residues: MGKAQPLPILITGGGRRIGLALAWHFINQKQPVIISYRTHYPAIDGLINAGAQCIQADFSTNDGVMAFADEVLKSTHGLRAILHNASAWMAEKPGTSLTDVLACMMQIHVNTPYLLNHALERLLRGHGHAASDIIHFTDYVVERGSDKHIAYAASKAALDNMTRSFARKLAPEVKVNSIAPSLILFNEHDDAEYRQQALNKSLMKTAPGEKEVIDLVDYLLTSCFVTGRSFPLDGGRHLR.

Y152 serves as the catalytic Proton acceptor.

The protein belongs to the short-chain dehydrogenases/reductases (SDR) family. FolM subfamily.

The enzyme catalyses (6S)-5,6,7,8-tetrahydrofolate + NADP(+) = 7,8-dihydrofolate + NADPH + H(+). It carries out the reaction 7,8-dihydromonapterin + NADPH + H(+) = 5,6,7,8-tetrahydromonapterin + NADP(+). Catalyzes the reduction of dihydromonapterin to tetrahydromonapterin. Also has lower activity with dihydrofolate. This is Dihydromonapterin reductase (folM) from Escherichia coli (strain SMS-3-5 / SECEC).